We begin with the raw amino-acid sequence, 494 residues long: Aspartyl/glutamyl-tRNA(Asn/Gln) amidotransferase subunit B (494 aa).

Belongs to the GatB/GatE family. GatB subfamily. Heterotrimer of A, B and C subunits.

It catalyses the reaction L-glutamyl-tRNA(Gln) + L-glutamine + ATP + H2O = L-glutaminyl-tRNA(Gln) + L-glutamate + ADP + phosphate + H(+). The enzyme catalyses L-aspartyl-tRNA(Asn) + L-glutamine + ATP + H2O = L-asparaginyl-tRNA(Asn) + L-glutamate + ADP + phosphate + 2 H(+). Allows the formation of correctly charged Asn-tRNA(Asn) or Gln-tRNA(Gln) through the transamidation of misacylated Asp-tRNA(Asn) or Glu-tRNA(Gln) in organisms which lack either or both of asparaginyl-tRNA or glutaminyl-tRNA synthetases. The reaction takes place in the presence of glutamine and ATP through an activated phospho-Asp-tRNA(Asn) or phospho-Glu-tRNA(Gln). In Trichodesmium erythraeum (strain IMS101), this protein is Aspartyl/glutamyl-tRNA(Asn/Gln) amidotransferase subunit B.